The following is a 311-amino-acid chain: Malate dehydrogenase (311 aa).

NAD(+) contacts are provided by residues 7 to 12 (GAGNVG) and D32. Positions 82 and 88 each coordinate substrate. NAD(+) is bound by residues N95 and 118–120 (VSN). Substrate-binding residues include N120 and R151. The active-site Proton acceptor is H175.

The protein belongs to the LDH/MDH superfamily. MDH type 3 family.

It catalyses the reaction (S)-malate + NAD(+) = oxaloacetate + NADH + H(+). Functionally, catalyzes the reversible oxidation of malate to oxaloacetate. This chain is Malate dehydrogenase, found in Flavobacterium johnsoniae (strain ATCC 17061 / DSM 2064 / JCM 8514 / BCRC 14874 / CCUG 350202 / NBRC 14942 / NCIMB 11054 / UW101) (Cytophaga johnsonae).